Reading from the N-terminus, the 478-residue chain is Muscarinic acetylcholine receptor M4 (478 aa).

Residues 1-30 (MXNFTPVNGSSANQSVRLVTAAHNHLETVE) lie on the Extracellular side of the membrane. N-linked (GlcNAc...) asparagine glycans are attached at residues N8 and N13. Residues 31–53 (MVFIATVTGSLSLVTVVGNILVM) traverse the membrane as a helical segment. At 54–67 (LSIKVNRQLQTVNN) the chain is on the cytoplasmic side. A helical transmembrane segment spans residues 68-88 (YFLFSLGCADLIIGAFSMNLY). Residues 89–105 (TLYIIKGYWPLGAVVCD) lie on the Extracellular side of the membrane. Residues C104 and C184 are joined by a disulfide bond. Residues 106–127 (LWLALDYVVSNASVMNLLIISF) form a helical membrane-spanning segment. At 128-147 (DRYFCVTKPLTYPARRTTKM) the chain is on the cytoplasmic side. A helical transmembrane segment spans residues 148 to 170 (AGLMIAAAWVLSFVLWAPAILFW). Over 171 to 192 (QFVVGKRTVPDNQCFIQFLSNP) the chain is Extracellular. Residues 193–215 (AVTFGTAIAAFYLPVVIMTVLYI) traverse the membrane as a helical segment. The Cytoplasmic portion of the chain corresponds to 216-400 (HISLASRSRV…AARERKVTRT (185 aa)). The disordered stretch occupies residues 271-333 (LEEAPPPALP…APTLQPRTLN (63 aa)). Residues 274-285 (APPPALPPPPRP) are compositionally biased toward pro residues. The segment covering 293–303 (NESSSGSATQN) has biased composition (polar residues). Over residues 310–332 (TELSTAEATTPALPAPTLQPRTL) the composition is skewed to low complexity. Residues 401–421 (IFAILLAFILTWTPYNVMVLV) traverse the membrane as a helical segment. Residues 422 to 435 (NTFCQSCIPERVWS) lie on the Extracellular side of the membrane. Residues 436–455 (IGYWLCYVNSTINPACYALC) form a helical membrane-spanning segment. The Cytoplasmic portion of the chain corresponds to 456–478 (NATFKKTFRHLLLCQYRNIGTAR). Phosphothreonine is present on residues T458, T462, and T476.

The protein belongs to the G-protein coupled receptor 1 family. Muscarinic acetylcholine receptor subfamily. CHRM4 sub-subfamily.

It localises to the cell membrane. The protein resides in the postsynaptic cell membrane. The muscarinic acetylcholine receptor mediates various cellular responses, including inhibition of adenylate cyclase, breakdown of phosphoinositides and modulation of potassium channels through the action of G proteins. Primary transducing effect is inhibition of adenylate cyclase. The protein is Muscarinic acetylcholine receptor M4 (Chrm4) of Rattus norvegicus (Rat).